Consider the following 427-residue polypeptide: Actin-related protein 3 (427 aa).

It belongs to the actin family. ARP3 subfamily. In terms of assembly, component of the Arp2/3 complex composed of arp2, act2, arc1/p41-ARC, arc2/p34-ARC, arc3/p21-ARC, arc4/p20-ARC and arc5/p16-ARC.

The protein localises to the cytoplasm. Its subcellular location is the cytoskeleton. It localises to the actin patch. Functionally, functions as ATP-binding component of the Arp2/3 complex which is involved in regulation of actin polymerization and together with an activating nucleation-promoting factor (NPF) mediates the formation of branched actin networks. Seems to contact the pointed end of the daughter actin filament. May be involved in cytokinesis. In Schizosaccharomyces pombe (strain 972 / ATCC 24843) (Fission yeast), this protein is Actin-related protein 3 (act2).